Here is a 397-residue protein sequence, read N- to C-terminus: Succinate--CoA ligase [ADP-forming] subunit beta (397 aa).

The region spanning 9–253 is the ATP-grasp domain; that stretch reads KEILASYGVR…IREENPIEVE (245 aa). Residues Lys50, 57–59, Val106, and Glu116 each bind ATP; that span reads GRG. 2 residues coordinate Mg(2+): Asn208 and Asp222. Substrate is bound by residues Asn273 and 330–332; that span reads GIV.

This sequence belongs to the succinate/malate CoA ligase beta subunit family. As to quaternary structure, heterotetramer of two alpha and two beta subunits. Mg(2+) serves as cofactor.

It catalyses the reaction succinate + ATP + CoA = succinyl-CoA + ADP + phosphate. The enzyme catalyses GTP + succinate + CoA = succinyl-CoA + GDP + phosphate. It participates in carbohydrate metabolism; tricarboxylic acid cycle; succinate from succinyl-CoA (ligase route): step 1/1. Its function is as follows. Succinyl-CoA synthetase functions in the citric acid cycle (TCA), coupling the hydrolysis of succinyl-CoA to the synthesis of either ATP or GTP and thus represents the only step of substrate-level phosphorylation in the TCA. The beta subunit provides nucleotide specificity of the enzyme and binds the substrate succinate, while the binding sites for coenzyme A and phosphate are found in the alpha subunit. The polypeptide is Succinate--CoA ligase [ADP-forming] subunit beta (Flavobacterium johnsoniae (strain ATCC 17061 / DSM 2064 / JCM 8514 / BCRC 14874 / CCUG 350202 / NBRC 14942 / NCIMB 11054 / UW101) (Cytophaga johnsonae)).